The chain runs to 160 residues: Phosphatidylinositol N-acetylglucosaminyltransferase subunit gpi15 (160 aa).

2 helical membrane-spanning segments follow: residues 22–42 (GTQMFALCFISFVIGATSLAI) and 48–68 (IIITLVELSFLLSLFHIISGV).

This sequence belongs to the PIGH family.

Its subcellular location is the endoplasmic reticulum membrane. It catalyses the reaction a 1,2-diacyl-sn-glycero-3-phospho-(1D-myo-inositol) + UDP-N-acetyl-alpha-D-glucosamine = a 6-(N-acetyl-alpha-D-glucosaminyl)-1-(1,2-diacyl-sn-glycero-3-phospho)-1D-myo-inositol + UDP + H(+). Its pathway is glycolipid biosynthesis; glycosylphosphatidylinositol-anchor biosynthesis. Part of the complex catalyzing the transfer of N-acetylglucosamine from UDP-N-acetylglucosamine to phosphatidylinositol, the first step of GPI biosynthesis. The sequence is that of Phosphatidylinositol N-acetylglucosaminyltransferase subunit gpi15 (gpi15) from Schizosaccharomyces pombe (strain 972 / ATCC 24843) (Fission yeast).